Consider the following 464-residue polypeptide: Cysteine--tRNA ligase (464 aa).

Cys32 serves as a coordination point for Zn(2+). Residues 34–44 (VTVYDDCHIGH) carry the 'HIGH' region motif. 3 residues coordinate Zn(2+): Cys213, His238, and Glu242. The 'KMSKS' region signature appears at 270–274 (KMSKS). Residue Lys273 coordinates ATP.

Belongs to the class-I aminoacyl-tRNA synthetase family. Monomer. Zn(2+) is required as a cofactor.

The protein localises to the cytoplasm. The catalysed reaction is tRNA(Cys) + L-cysteine + ATP = L-cysteinyl-tRNA(Cys) + AMP + diphosphate. The chain is Cysteine--tRNA ligase from Francisella tularensis subsp. tularensis (strain SCHU S4 / Schu 4).